The primary structure comprises 115 residues: MVSNASALGRNGVHDFILVRATAIVLTLYIIYMVGFFATSGELTYEVWIGFFASAFTKVFTLLALFSILIHAWIGMWQVLTDYVKPLALRLMLQLVIVVALVVYVIYGFVVVWGV.

At 1–15 the chain is on the cytoplasmic side; sequence MVSNASALGRNGVHD. The chain crosses the membrane as a helical span at residues 16 to 36; the sequence is FILVRATAIVLTLYIIYMVGF. Over 37–58 the chain is Periplasmic; the sequence is FATSGELTYEVWIGFFASAFTK. The helical transmembrane segment at 59 to 80 threads the bilayer; it reads VFTLLALFSILIHAWIGMWQVL. Histidine 71 contributes to the heme binding site. At 81–90 the chain is on the cytoplasmic side; that stretch reads TDYVKPLALR. Tyrosine 83 contacts a ubiquinone. The helical transmembrane segment at 91 to 115 threads the bilayer; the sequence is LMLQLVIVVALVVYVIYGFVVVWGV.

As to quaternary structure, part of an enzyme complex containing four subunits: a flavoprotein, an iron-sulfur protein, plus two membrane-anchoring proteins, SdhC and SdhD. The complex can form homotrimers. It depends on heme as a cofactor.

Its subcellular location is the cell inner membrane. It participates in carbohydrate metabolism; tricarboxylic acid cycle. Membrane-anchoring subunit of succinate dehydrogenase (SDH). The sequence is that of Succinate dehydrogenase hydrophobic membrane anchor subunit (sdhD) from Escherichia coli O6:H1 (strain CFT073 / ATCC 700928 / UPEC).